The primary structure comprises 319 residues: Acetyl-coenzyme A carboxylase carboxyl transferase subunit alpha (319 aa).

The 262-residue stretch at 32-293 (NVDAEVRALR…KAVLLNELDA (262 aa)) folds into the CoA carboxyltransferase C-terminal domain.

This sequence belongs to the AccA family. Acetyl-CoA carboxylase is a heterohexamer composed of biotin carboxyl carrier protein (AccB), biotin carboxylase (AccC) and two subunits each of ACCase subunit alpha (AccA) and ACCase subunit beta (AccD).

It is found in the cytoplasm. It carries out the reaction N(6)-carboxybiotinyl-L-lysyl-[protein] + acetyl-CoA = N(6)-biotinyl-L-lysyl-[protein] + malonyl-CoA. The protein operates within lipid metabolism; malonyl-CoA biosynthesis; malonyl-CoA from acetyl-CoA: step 1/1. Component of the acetyl coenzyme A carboxylase (ACC) complex. First, biotin carboxylase catalyzes the carboxylation of biotin on its carrier protein (BCCP) and then the CO(2) group is transferred by the carboxyltransferase to acetyl-CoA to form malonyl-CoA. This is Acetyl-coenzyme A carboxylase carboxyl transferase subunit alpha from Xanthomonas campestris pv. campestris (strain B100).